A 345-amino-acid chain; its full sequence is MSEPDRIVSAVQRGEDIDTTMRPQSLDEFVGQKTARANLKVFIEAARSRGEALDHVLFVGPPGLGKTTLAQIMARELGVNFRSTSGPVIAKAGDLAALLTNLEERDVLFIDEIHRLNPAVEEILYPAMEDYQLDLIIGEGPAARSVKIDLAKFTLVAATTRLGLLTTPLRDRFGIPIRLEFYTVDELQAIVTRGARIMGMPLAEDGAEEIARRARGTPRIAGRLLRRVRDFAYVAGAENVTRQIADAALSRLEVDALGLDQLDRRYLHMIVENFGGGPVGIETIAAALSEPRDAIEDIIEPYLIQQGFIQRTPRGRVLAAKAWRHLGLNPPKELAQSQINLFEEE.

Residues 4–182 are large ATPase domain (RuvB-L); sequence PDRIVSAVQR…FGIPIRLEFY (179 aa). Residues R22, G63, K66, T67, T68, 129-131, R172, Y182, and R219 each bind ATP; that span reads EDY. T67 contributes to the Mg(2+) binding site. The interval 183–253 is small ATPAse domain (RuvB-S); sequence TVDELQAIVT…IADAALSRLE (71 aa). The tract at residues 256-345 is head domain (RuvB-H); the sequence is ALGLDQLDRR…QSQINLFEEE (90 aa). Positions 292, 311, and 316 each coordinate DNA.

The protein belongs to the RuvB family. As to quaternary structure, homohexamer. Forms an RuvA(8)-RuvB(12)-Holliday junction (HJ) complex. HJ DNA is sandwiched between 2 RuvA tetramers; dsDNA enters through RuvA and exits via RuvB. An RuvB hexamer assembles on each DNA strand where it exits the tetramer. Each RuvB hexamer is contacted by two RuvA subunits (via domain III) on 2 adjacent RuvB subunits; this complex drives branch migration. In the full resolvosome a probable DNA-RuvA(4)-RuvB(12)-RuvC(2) complex forms which resolves the HJ.

The protein localises to the cytoplasm. The enzyme catalyses ATP + H2O = ADP + phosphate + H(+). In terms of biological role, the RuvA-RuvB-RuvC complex processes Holliday junction (HJ) DNA during genetic recombination and DNA repair, while the RuvA-RuvB complex plays an important role in the rescue of blocked DNA replication forks via replication fork reversal (RFR). RuvA specifically binds to HJ cruciform DNA, conferring on it an open structure. The RuvB hexamer acts as an ATP-dependent pump, pulling dsDNA into and through the RuvAB complex. RuvB forms 2 homohexamers on either side of HJ DNA bound by 1 or 2 RuvA tetramers; 4 subunits per hexamer contact DNA at a time. Coordinated motions by a converter formed by DNA-disengaged RuvB subunits stimulates ATP hydrolysis and nucleotide exchange. Immobilization of the converter enables RuvB to convert the ATP-contained energy into a lever motion, pulling 2 nucleotides of DNA out of the RuvA tetramer per ATP hydrolyzed, thus driving DNA branch migration. The RuvB motors rotate together with the DNA substrate, which together with the progressing nucleotide cycle form the mechanistic basis for DNA recombination by continuous HJ branch migration. Branch migration allows RuvC to scan DNA until it finds its consensus sequence, where it cleaves and resolves cruciform DNA. The chain is Holliday junction branch migration complex subunit RuvB from Chelativorans sp. (strain BNC1).